A 128-amino-acid polypeptide reads, in one-letter code: Lymphocyte antigen 6D (128 aa).

Positions 1–20 are cleaved as a signal peptide; sequence MKTVLLFLVALAAAAGPAQA. The UPAR/Ly6 domain maps to 21–108; sequence LRCHVCTSSS…WQSAAPARTS (88 aa). Disulfide bonds link cysteine 23–cysteine 45, cysteine 26–cysteine 32, cysteine 38–cysteine 63, cysteine 67–cysteine 86, and cysteine 87–cysteine 92. Serine 98 carries GPI-anchor amidated serine lipidation. Residues 99-128 constitute a propeptide, removed in mature form; that stretch reads WQSAAPARTSAHLGLALACGLLALLWAPGL.

Its subcellular location is the cell membrane. May act as a specification marker at earliest stage specification of lymphocytes between B- and T-cell development. Marks the earliest stage of B-cell specification. This Bos taurus (Bovine) protein is Lymphocyte antigen 6D (LY6D).